The primary structure comprises 619 residues: MFVPRSLKIKRSSNDDLKSGEAKKSKPEAGGLQVEGDRDTPVHTSVTEEAVTADKPGHASSTNSPSCQLAEVSSTGPDEGVKDSHPSEEPVKSFSKTQRWPEPGEPVCVVCGRYGEYICDKTDEDVCSLECKAKHLLQVKEGEGSLRPSSPQRVAAEPESPLDAFYVYKEHPFIVTLKEDQIETLKQQLGISVQGQDVARPIIDFEHCGFPETLNQNLKKSGYEVPTPIQMQMIPVGLLGRDILASADTGSGKTAAFLLPVIIRAFSEDKTPSALILTPTRELAIQIERQAKELMSGLPRMKTVLLVGGLPLPPQLYRLRQHVKVIIATPGRLLDIIKQSSVSLSGIKIVVVDEADTMLKMGFQQQVLDVLEHTPGDCQTILVSATIPDSIEQLTDQLLHNPVRIITGDKNLPCASVRQIILWVEDPAKKKKLFEILNDQKLFKPPVLVFVDCKLGADLLSEAVQKITGLNSTSIHSEKSQVERRDILKGLLEGDYEVVVSTGVLGRGLDLVNVKLVVNFDMPSSMDEYVHQVGRVGRLGQNGTAITFINNNSKRLFWDVAKRVKPTGSILPPQLLNSPYLHEQKRKEQQKDRQTQNSLVTGANLMDIIRKHEKSSSQK.

The disordered stretch occupies residues 1 to 101; that stretch reads MFVPRSLKIK…KSFSKTQRWP (101 aa). Residues 12–27 show a composition bias toward basic and acidic residues; that stretch reads SSNDDLKSGEAKKSKP. A Glycyl lysine isopeptide (Lys-Gly) (interchain with G-Cter in SUMO2) cross-link involves residue lysine 26. Over residues 59 to 76 the composition is skewed to polar residues; sequence ASSTNSPSCQLAEVSSTG. Serine 64 carries the phosphoserine modification. The span at 79 to 91 shows a compositional bias: basic and acidic residues; it reads EGVKDSHPSEEPV. The segment at 104–133 adopts an HIT-type zinc-finger fold; that stretch reads GEPVCVVCGRYGEYICDKTDEDVCSLECKA. Serine 160 carries the phosphoserine modification. Residues 203–231 carry the Q motif motif; the sequence is IDFEHCGFPETLNQNLKKSGYEVPTPIQM. The 172-residue stretch at 234–405 folds into the Helicase ATP-binding domain; that stretch reads IPVGLLGRDI…DQLLHNPVRI (172 aa). 247 to 254 is an ATP binding site; the sequence is ADTGSGKT. The DEAD box signature appears at 353-356; that stretch reads DEAD. Residues 416–579 enclose the Helicase C-terminal domain; that stretch reads SVRQIILWVE…ILPPQLLNSP (164 aa). Residues 583–594 show a composition bias toward basic and acidic residues; that stretch reads EQKRKEQQKDRQ. A disordered region spans residues 583–603; it reads EQKRKEQQKDRQTQNSLVTGA.

This sequence belongs to the DEAD box helicase family. DDX59 subfamily. As to quaternary structure, interacts (via HIT-type zinc finger) with the RUVBL1/RUVBL2 complex in the presence of ADP.

Its subcellular location is the cytoplasm. It localises to the nucleus. The catalysed reaction is ATP + H2O = ADP + phosphate + H(+). This is Probable ATP-dependent RNA helicase DDX59 (Ddx59) from Mus musculus (Mouse).